Here is a 418-residue protein sequence, read N- to C-terminus: Torsin-4A-B (418 aa).

Residues Cys128–Ile144 traverse the membrane as a helical segment. Gly200–Ser207 provides a ligand contact to ATP.

Belongs to the ClpA/ClpB family. Torsin subfamily.

It localises to the membrane. The chain is Torsin-4A-B (tor4a-b) from Xenopus laevis (African clawed frog).